The sequence spans 142 residues: Inner membrane protein YqaA (142 aa).

Residues 1 to 2 (MS) are Cytoplasmic-facing. A helical membrane pass occupies residues 3–23 (EALSLFSLFASSFLSATLLPG). Topologically, residues 24–26 (NSE) are periplasmic. The helical transmembrane segment at 27–47 (VVLVAMLLSGISHPWVLVLTA) threads the bilayer. Residues 48–86 (TMGNSLGGLTNVILGRFFPLRKTSRWQEKATGWLKRYGA) lie on the Cytoplasmic side of the membrane. A helical membrane pass occupies residues 87–107 (VTLLLSWMPVVGDLLCLLAGW). Topologically, residues 108-142 (MRISWGPVIFFLCLGKALRYVAVAAATVQGMMWWH) are periplasmic.

To H.influenzae HI_0489.

The protein localises to the cell inner membrane. The polypeptide is Inner membrane protein YqaA (yqaA) (Escherichia coli (strain K12)).